The primary structure comprises 243 residues: 1-(5-phosphoribosyl)-5-[(5-phosphoribosylamino)methylideneamino] imidazole-4-carboxamide isomerase (243 aa).

The Proton acceptor role is filled by aspartate 8. Aspartate 130 serves as the catalytic Proton donor.

The protein belongs to the HisA/HisF family.

The protein resides in the cytoplasm. It catalyses the reaction 1-(5-phospho-beta-D-ribosyl)-5-[(5-phospho-beta-D-ribosylamino)methylideneamino]imidazole-4-carboxamide = 5-[(5-phospho-1-deoxy-D-ribulos-1-ylimino)methylamino]-1-(5-phospho-beta-D-ribosyl)imidazole-4-carboxamide. It functions in the pathway amino-acid biosynthesis; L-histidine biosynthesis; L-histidine from 5-phospho-alpha-D-ribose 1-diphosphate: step 4/9. The sequence is that of 1-(5-phosphoribosyl)-5-[(5-phosphoribosylamino)methylideneamino] imidazole-4-carboxamide isomerase from Ruthia magnifica subsp. Calyptogena magnifica.